The primary structure comprises 358 residues: Probable protein phosphatase 2C 34 (358 aa).

The PPM-type phosphatase domain occupies 62–349; that stretch reads LASVFSRRGE…DDISAVCLFF (288 aa). Mn(2+) contacts are provided by Asp98, Gly99, Asp294, and Asp340.

The protein belongs to the PP2C family. Mg(2+) is required as a cofactor. It depends on Mn(2+) as a cofactor.

It carries out the reaction O-phospho-L-seryl-[protein] + H2O = L-seryl-[protein] + phosphate. It catalyses the reaction O-phospho-L-threonyl-[protein] + H2O = L-threonyl-[protein] + phosphate. This Arabidopsis thaliana (Mouse-ear cress) protein is Probable protein phosphatase 2C 34.